Consider the following 204-residue polypeptide: Proteasome subunit beta 1 (204 aa).

Residues Met1–Ala9 constitute a propeptide, removed in mature form; by autocatalysis. Thr10 acts as the Nucleophile in catalysis.

It belongs to the peptidase T1B family. As to quaternary structure, the 20S proteasome core is composed of 14 alpha and 14 beta subunits that assemble into four stacked heptameric rings, resulting in a barrel-shaped structure. The two inner rings, each composed of seven catalytic beta subunits, are sandwiched by two outer rings, each composed of seven alpha subunits. The catalytic chamber with the active sites is on the inside of the barrel. Has a gated structure, the ends of the cylinder being occluded by the N-termini of the alpha-subunits. Is capped at one or both ends by the proteasome regulatory ATPase, PAN.

It is found in the cytoplasm. The enzyme catalyses Cleavage of peptide bonds with very broad specificity.. With respect to regulation, the formation of the proteasomal ATPase PAN-20S proteasome complex, via the docking of the C-termini of PAN into the intersubunit pockets in the alpha-rings, triggers opening of the gate for substrate entry. Interconversion between the open-gate and close-gate conformations leads to a dynamic regulation of the 20S proteasome proteolysis activity. In terms of biological role, component of the proteasome core, a large protease complex with broad specificity involved in protein degradation. The polypeptide is Proteasome subunit beta 1 (Hyperthermus butylicus (strain DSM 5456 / JCM 9403 / PLM1-5)).